Consider the following 685-residue polypeptide: Delta-like protein 4 (685 aa).

A signal peptide spans 1 to 26 (MAAASRSASGWALLLLVALWQQRAAG). Over 27 to 529 (SGVFQLQLQE…PVGLPPSFPW (503 aa)) the chain is Extracellular. 2 disulfides stabilise this stretch: C50/C54 and C61/C74. 2 N-linked (GlcNAc...) asparagine glycosylation sites follow: N108 and N183. Residues 173–217 (VICSDNYYGDNCSRLCKKRNDHFGHYVCQPDGNLSCLPGWTGEYC) form the DSL domain. Residues C175 and C184 are joined by a disulfide bond. 2 interaction with Notch1 regions span residues 185 to 187 (SRL) and 191 to 195 (RNDHF). C188 and C200 are joined by a disulfide. N-linked (GlcNAc...) asparagine glycosylation is present at N205. Cystine bridges form between C208/C217, C222/C233, C226/C239, C241/C250, C253/C264, C259/C270, C272/C281, C288/C300, C294/C310, C312/C321, C328/C339, C333/C348, C350/C359, C366/C377, C371/C388, C390/C399, C406/C417, C411/C426, C428/C437, C444/C455, C449/C464, C466/C475, C484/C495, C489/C506, and C508/C517. EGF-like domains lie at 218 to 251 (QQPI…RLCN), 252 to 282 (ECIP…LFCD), 284 to 322 (DLNY…VDCE), 324 to 360 (ELSE…LHCE), 362 to 400 (STLS…SNCE), 402 to 438 (KVDR…TYCE), 440 to 476 (HVSD…RRCE), and 480 to 518 (SIDA…SRCE). N-linked (GlcNAc...) asparagine glycosylation is present at N393. The helical transmembrane segment at 530 to 550 (VAVSLGVGLAVLLVLLGMVAV) threads the bilayer. Topologically, residues 551-685 (AVRQLRLRRP…RNECVIATEV (135 aa)) are cytoplasmic.

In terms of assembly, interacts with NOTCH4. Interacts (via N-terminal DSL and MNNL domains) with NOTCH1 (via EGF-like domains). Expressed in vascular endothelium.

Its subcellular location is the cell membrane. Its function is as follows. Involved in the Notch signaling pathway as Notch ligand. Activates NOTCH1 and NOTCH4. Involved in angiogenesis; negatively regulates endothelial cell proliferation and migration and angiogenic sprouting. Essential for retinal progenitor proliferation. Required for suppressing rod fates in late retinal progenitors as well as for proper generation of other retinal cell types. During spinal cord neurogenesis, inhibits V2a interneuron fate. This Homo sapiens (Human) protein is Delta-like protein 4 (DLL4).